The primary structure comprises 174 residues: Small ribosomal subunit protein uS5 (174 aa).

The region spanning 18 to 81 (LKDRLVSVNR…EDAKKNLVKI (64 aa)) is the S5 DRBM domain.

It belongs to the universal ribosomal protein uS5 family. As to quaternary structure, part of the 30S ribosomal subunit. Contacts proteins S4 and S8.

Functionally, with S4 and S12 plays an important role in translational accuracy. In terms of biological role, located at the back of the 30S subunit body where it stabilizes the conformation of the head with respect to the body. This chain is Small ribosomal subunit protein uS5, found in Flavobacterium psychrophilum (strain ATCC 49511 / DSM 21280 / CIP 103535 / JIP02/86).